The following is a 463-amino-acid chain: MTKPFSVVLASLLAITSTISPLASAQQSQPLDRIAAIVDEDVVLQSELDRAVRNVKSQYAGRENQLPPDDVLQRQVLERLILVKLQVGRADGSGIRVSDEELNRAIASIAQQNGTTVDGLRQKLAADGMGYADFRASVRDEIIVQRLRQSFAQSRISVSEGEVDTALTQQAATGSKYHLAHILIGLPEGATAEQIATGQKKVDGVKTLIDKGELDFPAAAVRYSDSPNALEGGDLGWRSLDEIPNAFAQLIRDMKPGQVAGPLRGPSGFQLLKLMEMRDANAGGEKKMVTEYNARHILVRVGDNQTEAQAKAKIDTIRARIVGGADFQATAKESSEDTNSRGQGGDLGWFPADAFGPDFGKQVEGLADGAVSEPFRTQAGWHIVQRVGSRQTDVSAENQRAQVRETIGRRKLEEEYNRYLQELRGEAYVSYRTGDRADNNATAAPAKSADPALPAPPPAKPTR.

An N-terminal signal peptide occupies residues 1 to 25; sequence MTKPFSVVLASLLAITSTISPLASA. PpiC domains lie at 174 to 276 and 289 to 388; these read GSKY…KLME and VTEY…QRVG. Disordered regions lie at residues 329 to 348 and 434 to 463; these read ATAK…GDLG and GDRA…KPTR. A compositionally biased stretch (low complexity) spans 439–452; that stretch reads NNATAAPAKSADPA. The span at 453 to 463 shows a compositional bias: pro residues; the sequence is LPAPPPAKPTR.

It is found in the periplasm. The enzyme catalyses [protein]-peptidylproline (omega=180) = [protein]-peptidylproline (omega=0). Its function is as follows. Chaperone involved in the correct folding and assembly of outer membrane proteins. Recognizes specific patterns of aromatic residues and the orientation of their side chains, which are found more frequently in integral outer membrane proteins. May act in both early periplasmic and late outer membrane-associated steps of protein maturation. This chain is Chaperone SurA, found in Xanthomonas oryzae pv. oryzae (strain MAFF 311018).